The primary structure comprises 93 residues: YcgL domain-containing protein AHA_2135 (93 aa).

Residues 1–85 enclose the YcgL domain; the sequence is MLCAVYKSRK…PPENLLEQHK (85 aa).

In Aeromonas hydrophila subsp. hydrophila (strain ATCC 7966 / DSM 30187 / BCRC 13018 / CCUG 14551 / JCM 1027 / KCTC 2358 / NCIMB 9240 / NCTC 8049), this protein is YcgL domain-containing protein AHA_2135.